A 211-amino-acid chain; its full sequence is Histone H1-beta, late embryonic (211 aa).

Disordered regions lie at residues 1–22 (MAAE…PSSS) and 81–211 (KGAS…AAKK). An H15 domain is found at 17-91 (AHPSSSEMVL…GASGSFKLGK (75 aa)). Basic and acidic residues-rich tracts occupy residues 95-107 (GKSD…DAAK) and 114-123 (KKKEAKEKKA). Basic residues-rich tracts occupy residues 124 to 177 (ARSK…KKAA) and 185 to 211 (KAAK…AAKK).

The protein belongs to the histone H1/H5 family.

It is found in the nucleus. The protein localises to the chromosome. In terms of biological role, histones H1 are necessary for the condensation of nucleosome chains into higher-order structures. This Strongylocentrotus purpuratus (Purple sea urchin) protein is Histone H1-beta, late embryonic.